The sequence spans 482 residues: MMETMPNWLKQRAFLTPDRTAIEIEEEKVTFMQLHEKVVSVCEHLTHVGVKRGQKVAVLMKNGIEMITVIHALSYAGAVAVLLNTRLSREELLWQMDDAEVICLVTDQDFEAKDIPVYSFAEVMNGPKEEASIQEEFSLREAMTIIYTSGTTGKPKGVILTYGNHWASAVGSSLNLGLRDDDCWLACMPMFHVGGLSLLMKNIMYGMRILLVPKYDADFIHKALQTRGVTIISVVSKMLTDLLERLGEGTYPSSLRCMLLGGGPAPKPLLETCVDKGIPVYQTYGMTETSSQICTLSADYMLTKVGSAGKPLFQCQLRIEKDGVVVPPFAEGEIVVKGPNVTGGYFNREDATRETIQNGWLHTGDLGYLDEEGFLYVLDRRSDLIISGGENIYPAQIEEVLLSHPMVAEAGVVGMTDDKWGQVPAAFVVKSGEITEEEILHFCEEKLAKYKVPKKACFLEELPRNASKKLLRRELRQLVEEM.

The protein belongs to the ATP-dependent AMP-binding enzyme family. MenE subfamily.

The enzyme catalyses 2-succinylbenzoate + ATP + CoA = 2-succinylbenzoyl-CoA + AMP + diphosphate. It functions in the pathway quinol/quinone metabolism; 1,4-dihydroxy-2-naphthoate biosynthesis; 1,4-dihydroxy-2-naphthoate from chorismate: step 5/7. It participates in quinol/quinone metabolism; menaquinone biosynthesis. In terms of biological role, converts 2-succinylbenzoate (OSB) to 2-succinylbenzoyl-CoA (OSB-CoA). The protein is 2-succinylbenzoate--CoA ligase of Bacillus cereus (strain AH820).